Consider the following 97-residue polypeptide: Aspartyl/glutamyl-tRNA(Asn/Gln) amidotransferase subunit C (97 aa).

It belongs to the GatC family. In terms of assembly, heterotrimer of A, B and C subunits.

It carries out the reaction L-glutamyl-tRNA(Gln) + L-glutamine + ATP + H2O = L-glutaminyl-tRNA(Gln) + L-glutamate + ADP + phosphate + H(+). It catalyses the reaction L-aspartyl-tRNA(Asn) + L-glutamine + ATP + H2O = L-asparaginyl-tRNA(Asn) + L-glutamate + ADP + phosphate + 2 H(+). Its function is as follows. Allows the formation of correctly charged Asn-tRNA(Asn) or Gln-tRNA(Gln) through the transamidation of misacylated Asp-tRNA(Asn) or Glu-tRNA(Gln) in organisms which lack either or both of asparaginyl-tRNA or glutaminyl-tRNA synthetases. The reaction takes place in the presence of glutamine and ATP through an activated phospho-Asp-tRNA(Asn) or phospho-Glu-tRNA(Gln). The chain is Aspartyl/glutamyl-tRNA(Asn/Gln) amidotransferase subunit C from Prochlorococcus marinus (strain MIT 9211).